The following is a 300-amino-acid chain: uncharacterized protein (300 aa).

4 CBS domains span residues 10–68 (RFPP…FRDV), 88–148 (FLKY…HVKV), 152–207 (MTSE…EDVL), and 226–284 (ISSK…GVEI).

This is an uncharacterized protein from Thermofilum pendens.